Consider the following 150-residue polypeptide: Large ribosomal subunit protein bL9 (150 aa).

This sequence belongs to the bacterial ribosomal protein bL9 family.

Its function is as follows. Binds to the 23S rRNA. This is Large ribosomal subunit protein bL9 from Alcanivorax borkumensis (strain ATCC 700651 / DSM 11573 / NCIMB 13689 / SK2).